The chain runs to 261 residues: MSLTELTGNPRHDQLLMLIAERGYMNIDELANLLDVSTQTVRRDIRKLSEQGLITRHHGGAGRASSVVNTAFEQREVSQTEEKKAIAEAVADYIPDGSTIFITIGTTVEHVARALLNHNHLRIITNSLRVAHILYHNPRFEVMVPGGTLRSHNSGIIGPSAASFVADFRADYLVTSVGAIESDGALMEFDVNEANVVKTMMAHARNILLVADHTKYHASAAVEIGNVAQVTALFTDELPPAALKSRLQDSQIEIILPQEDA.

The HTH deoR-type domain occupies 8-63 (GNPRHDQLLMLIAERGYMNIDELANLLDVSTQTVRRDIRKLSEQGLITRHHGGAGR). The segment at residues 25–44 (MNIDELANLLDVSTQTVRRD) is a DNA-binding region (H-T-H motif).

In terms of assembly, monomer in the absence of DNA. Exhibits a high level of cooperativity once it is bound to its target DNA.

With respect to regulation, inactivated in the presence of the effectors sulfoquinovose and sulfoquinovosyl glycerol, leading to the de-repression of the target genes. Functionally, involved in the regulation of the sulfoquinovose operon. Represses the expression of the yihUTS operon and of the yihV and csqR genes. Binds DNA inside the spacer between the bidirectional transcription units comprising the yihUTS operon and the yihV gene, and upstream the csqR gene itself. This Escherichia coli (strain K12) protein is HTH-type transcriptional repressor CsqR.